Reading from the N-terminus, the 314-residue chain is Ferredoxin:CoB-CoM heterodisulfide reductase subunit B (314 aa).

This sequence belongs to the HdrB family. As to quaternary structure, the ferredoxin:CoB-CoM heterodisulfide reductase is composed of three subunits; HdrA1, HdrB1 and HdrC1. The cofactor is [4Fe-4S] cluster.

The protein resides in the cytoplasm. It carries out the reaction coenzyme B + coenzyme M + 2 oxidized [2Fe-2S]-[ferredoxin] = coenzyme M-coenzyme B heterodisulfide + 2 reduced [2Fe-2S]-[ferredoxin] + 2 H(+). It functions in the pathway cofactor metabolism; coenzyme M-coenzyme B heterodisulfide reduction; coenzyme B and coenzyme M from coenzyme M-coenzyme B heterodisulfide: step 1/1. Functionally, part of a complex that catalyzes the reversible reduction of CoM-S-S-CoB to the thiol-coenzymes H-S-CoM (coenzyme M) and H-S-CoB (coenzyme B). Probably involved in methylotrophic methanogenesis but not in aceticlastic methanogenesis. The protein is Ferredoxin:CoB-CoM heterodisulfide reductase subunit B of Methanosarcina acetivorans (strain ATCC 35395 / DSM 2834 / JCM 12185 / C2A).